Consider the following 283-residue polypeptide: ATP phosphoribosyltransferase (283 aa).

Belongs to the ATP phosphoribosyltransferase family. Long subfamily. Requires Mg(2+) as cofactor.

It localises to the cytoplasm. It carries out the reaction 1-(5-phospho-beta-D-ribosyl)-ATP + diphosphate = 5-phospho-alpha-D-ribose 1-diphosphate + ATP. The protein operates within amino-acid biosynthesis; L-histidine biosynthesis; L-histidine from 5-phospho-alpha-D-ribose 1-diphosphate: step 1/9. With respect to regulation, feedback inhibited by histidine. Catalyzes the condensation of ATP and 5-phosphoribose 1-diphosphate to form N'-(5'-phosphoribosyl)-ATP (PR-ATP). Has a crucial role in the pathway because the rate of histidine biosynthesis seems to be controlled primarily by regulation of HisG enzymatic activity. The polypeptide is ATP phosphoribosyltransferase (Bifidobacterium longum (strain NCC 2705)).